The primary structure comprises 247 residues: Malonyl-[acyl-carrier protein] O-methyltransferase (247 aa).

It belongs to the methyltransferase superfamily.

It carries out the reaction malonyl-[ACP] + S-adenosyl-L-methionine = malonyl-[ACP] methyl ester + S-adenosyl-L-homocysteine. It functions in the pathway cofactor biosynthesis; biotin biosynthesis. Its function is as follows. Converts the free carboxyl group of a malonyl-thioester to its methyl ester by transfer of a methyl group from S-adenosyl-L-methionine (SAM). It allows to synthesize pimeloyl-ACP via the fatty acid synthetic pathway. This Buchnera aphidicola subsp. Baizongia pistaciae (strain Bp) protein is Malonyl-[acyl-carrier protein] O-methyltransferase.